Here is a 242-residue protein sequence, read N- to C-terminus: DNA repair protein RecO (242 aa).

This sequence belongs to the RecO family. In terms of assembly, monomer.

Involved in DNA repair and RecF pathway recombination. This is DNA repair protein RecO from Salmonella dublin (strain CT_02021853).